We begin with the raw amino-acid sequence, 190 residues long: Orotate phosphoribosyltransferase (190 aa).

114-122 (EDVITTGGS) lines the 5-phospho-alpha-D-ribose 1-diphosphate pocket. 2 residues coordinate orotate: T118 and R146.

Belongs to the purine/pyrimidine phosphoribosyltransferase family. PyrE subfamily. As to quaternary structure, homodimer. The cofactor is Mg(2+).

It carries out the reaction orotidine 5'-phosphate + diphosphate = orotate + 5-phospho-alpha-D-ribose 1-diphosphate. The protein operates within pyrimidine metabolism; UMP biosynthesis via de novo pathway; UMP from orotate: step 1/2. In terms of biological role, catalyzes the transfer of a ribosyl phosphate group from 5-phosphoribose 1-diphosphate to orotate, leading to the formation of orotidine monophosphate (OMP). The protein is Orotate phosphoribosyltransferase of Caldicellulosiruptor bescii (strain ATCC BAA-1888 / DSM 6725 / KCTC 15123 / Z-1320) (Anaerocellum thermophilum).